A 54-amino-acid chain; its full sequence is Large ribosomal subunit protein bL33B (54 aa).

This sequence belongs to the bacterial ribosomal protein bL33 family.

The chain is Large ribosomal subunit protein bL33B from Mycobacterium sp. (strain JLS).